We begin with the raw amino-acid sequence, 514 residues long: Protein farnesyltransferase subunit beta (514 aa).

Residues 1-13 (MRHHTKNLRRRAI) are compositionally biased toward basic residues. The interval 1–56 (MRHHTKNLRRRAIFLRTTPRGNMDSSSSVATSTSSSSNHRLVRSSEGSPSAGGDDI) is disordered. Over residues 25–39 (SSSSVATSTSSSSNH) the composition is skewed to low complexity. PFTB repeat units follow at residues 180-221 (AESL…AVVG), 231-272 (RRAL…SLLN), 293-334 (FTGL…SLLG), 346-388 (IERL…PLIE), and 410-454 (REGL…SSAQ). Residues 319-322 (HGAY) and 367-370 (RTNK) contribute to the (2E,6E)-farnesyl diphosphate site. 2 residues coordinate Zn(2+): Asp373 and Cys375. 376-379 (YSHW) contributes to the (2E,6E)-farnesyl diphosphate binding site. Zn(2+) is bound at residue His442.

It belongs to the protein prenyltransferase subunit beta family. Heterodimer of an alpha and a beta subunit. Interacts with RAS1 and RAS2. Zn(2+) serves as cofactor. As to expression, highly expressed in mycelium, conidium, conidial germination, early formed appressorium and the late infection hypha.

The protein localises to the cytoplasm. It carries out the reaction L-cysteinyl-[protein] + (2E,6E)-farnesyl diphosphate = S-(2E,6E)-farnesyl-L-cysteinyl-[protein] + diphosphate. Its function is as follows. Catalyzes the transfer of a farnesyl moiety from farnesyl diphosphate to a cysteine at the fourth position from the C-terminus of several proteins having the C-terminal sequence Cys-aliphatic-aliphatic-X. The beta subunit is responsible for peptide-binding. This chain is Protein farnesyltransferase subunit beta (RAM1), found in Pyricularia oryzae (strain 70-15 / ATCC MYA-4617 / FGSC 8958) (Rice blast fungus).